The primary structure comprises 360 residues: Probable protein phosphatase 2C 54 (360 aa).

Residues 1-39 (MCVEESEGAERLDFGEPAAAAADAGKSKSKSPDELPSPR) form a disordered region. The PPM-type phosphatase domain occupies 65 to 325 (RSGDWSDIGG…DNLTAVLVSF (261 aa)). Mn(2+) is bound by residues D109, G110, D273, and D316.

Belongs to the PP2C family. It depends on Mg(2+) as a cofactor. Mn(2+) serves as cofactor.

It carries out the reaction O-phospho-L-seryl-[protein] + H2O = L-seryl-[protein] + phosphate. The enzyme catalyses O-phospho-L-threonyl-[protein] + H2O = L-threonyl-[protein] + phosphate. In Oryza sativa subsp. japonica (Rice), this protein is Probable protein phosphatase 2C 54.